We begin with the raw amino-acid sequence, 122 residues long: Large ribosomal subunit protein uL14 (122 aa).

This sequence belongs to the universal ribosomal protein uL14 family. In terms of assembly, part of the 50S ribosomal subunit. Forms a cluster with proteins L3 and L19. In the 70S ribosome, L14 and L19 interact and together make contacts with the 16S rRNA in bridges B5 and B8.

Its function is as follows. Binds to 23S rRNA. Forms part of two intersubunit bridges in the 70S ribosome. This Streptococcus thermophilus (strain CNRZ 1066) protein is Large ribosomal subunit protein uL14.